Reading from the N-terminus, the 394-residue chain is RNA binding protein fox-1 homolog 2 (394 aa).

2 disordered regions span residues 1–70 and 83–135; these read MGRL…DYAG and TQAH…HVSN. Polar residues-rich tracts occupy residues 24-36 and 83-103; these read RDSQ…TTTP and TQAH…SLTT. Residues 105 to 125 are compositionally biased toward low complexity; sequence GGAQTDGQQSQTQSSENSESK. Residues 129 to 205 form the RRM domain; it reads KRLHVSNIPF…RKIEVNNATA (77 aa). Arg-285 carries the post-translational modification Omega-N-methylarginine. An asymmetric dimethylarginine mark is found at Arg-301 and Arg-333. An asymmetric dimethylarginine; alternate mark is found at Arg-385 and Arg-390. Omega-N-methylarginine; alternate is present on residues Arg-385 and Arg-390.

In terms of assembly, interacts with ER-alpha N-terminal activation domain. Interacts with RBPMS; the interaction allows cooperative assembly of stable cell-specific alternative splicing regulatory complexes.

It localises to the nucleus. The protein resides in the cytoplasm. Functionally, RNA-binding protein that regulates alternative splicing events by binding to 5'-UGCAUGU-3' elements. Prevents binding of U2AF2 to the 3'-splice site. Regulates alternative splicing of tissue-specific exons and of differentially spliced exons during erythropoiesis. Seems to act as a coregulatory factor of ER-alpha. Together with RNA binding proteins RBPMS and MBNL1/2, activates vascular smooth muscle cells alternative splicing events. In Bos taurus (Bovine), this protein is RNA binding protein fox-1 homolog 2 (RBFOX2).